We begin with the raw amino-acid sequence, 561 residues long: Methyl-accepting chemotaxis protein CtpM (561 aa).

Topologically, residues 1–11 are cytoplasmic; sequence MMRLTLKSKVL. The helical transmembrane segment at 12 to 32 threads the bilayer; that stretch reads LLAMVPVLLFALVLSGGAVLI. Residues 33-205 are Periplasmic-facing; it reads LKKQADAEVK…KQDIDERIGT (173 aa). The chain crosses the membrane as a helical span at residues 206-226; sequence LIASIVGIAGVLLVVLLVIGL. Residues 227–561 are Cytoplasmic-facing; sequence AVANAMLRPL…LGRLVGQFRI (335 aa). The HAMP domain maps to 230–284; that stretch reads NAMLRPLHQIRQNLDDIAAGEGDLTRRLPVTSYDELGELAGSFNRFVEKIHGLVR. The 237-residue stretch at 289–525 folds into the Methyl-accepting transducer domain; sequence MTGDLKQLVE…EINRSVHQIA (237 aa). Residues 333–357 are disordered; that stretch reads HEVAQSAQRAAEAAQQTDHEGQAAK. Positions 336-348 are enriched in low complexity; it reads AQSAQRAAEAAQQ.

It belongs to the methyl-accepting chemotaxis (MCP) protein family. As to quaternary structure, homodimer. The ligand-binding domain (LBD) is dimeric in the presence and the absence of ligands.

It localises to the cell inner membrane. In terms of biological role, chemotactic-signal transducers respond to changes in the concentration of attractants and repellents in the environment, transduce a signal from the outside to the inside of the cell, and facilitate sensory adaptation through the variation of the level of methylation. Directly recognizes five C4-dicarboxylic acids: L-malic, citramalic, citraconic, bromosuccinic and methylsuccinic acids. Three of the identified ligands act as chemoattractants (L-malic, D,L-bromosuccinic and L-citramalic acids) whereas two of them (L-methylsuccinic and citraconic acids) behave as antagonists by inhibiting the downstream chemotaxis signaling cascade. Antagonists compete with chemoattractants, thereby decreasing the affinity for chemoattractants and the subsequent chemotactic response. Acts through the che chemosensory pathway. The protein is Methyl-accepting chemotaxis protein CtpM of Pseudomonas aeruginosa (strain ATCC 15692 / DSM 22644 / CIP 104116 / JCM 14847 / LMG 12228 / 1C / PRS 101 / PAO1).